A 303-amino-acid polypeptide reads, in one-letter code: Oxygen-dependent coproporphyrinogen-III oxidase (303 aa).

Position 93 (Ser93) interacts with substrate. Residues His97 and His107 each contribute to the a divalent metal cation site. The active-site Proton donor is His107. 109-111 (NVR) serves as a coordination point for substrate. His149 and His179 together coordinate a divalent metal cation. The tract at residues 244 to 279 (YVEFNLVFDRGTLFGLQSGGRTESILLSMPPLAQWR) is important for dimerization. 262 to 264 (GGR) is a binding site for substrate.

Belongs to the aerobic coproporphyrinogen-III oxidase family. In terms of assembly, homodimer. It depends on a divalent metal cation as a cofactor.

It is found in the cytoplasm. The enzyme catalyses coproporphyrinogen III + O2 + 2 H(+) = protoporphyrinogen IX + 2 CO2 + 2 H2O. It participates in porphyrin-containing compound metabolism; protoporphyrin-IX biosynthesis; protoporphyrinogen-IX from coproporphyrinogen-III (O2 route): step 1/1. Functionally, involved in the heme biosynthesis. Catalyzes the aerobic oxidative decarboxylation of propionate groups of rings A and B of coproporphyrinogen-III to yield the vinyl groups in protoporphyrinogen-IX. This Bordetella pertussis (strain Tohama I / ATCC BAA-589 / NCTC 13251) protein is Oxygen-dependent coproporphyrinogen-III oxidase.